Consider the following 408-residue polypeptide: Formate-dependent phosphoribosylglycinamide formyltransferase (408 aa).

N(1)-(5-phospho-beta-D-ribosyl)glycinamide is bound by residues 25 to 26 and glutamate 85; that span reads EL. Residues arginine 118, lysine 159, 164-169, 199-202, and glutamate 207 contribute to the ATP site; these read SSGKGQ and EAFV. Residues 123-318 enclose the ATP-grasp domain; it reads KLAAEELGLP…EFELHAKAIL (196 aa). Positions 277 and 289 each coordinate Mg(2+). Residues aspartate 296, lysine 365, and 372-373 contribute to the N(1)-(5-phospho-beta-D-ribosyl)glycinamide site; that span reads RR.

The protein belongs to the PurK/PurT family. As to quaternary structure, homodimer.

It catalyses the reaction N(1)-(5-phospho-beta-D-ribosyl)glycinamide + formate + ATP = N(2)-formyl-N(1)-(5-phospho-beta-D-ribosyl)glycinamide + ADP + phosphate + H(+). Its pathway is purine metabolism; IMP biosynthesis via de novo pathway; N(2)-formyl-N(1)-(5-phospho-D-ribosyl)glycinamide from N(1)-(5-phospho-D-ribosyl)glycinamide (formate route): step 1/1. In terms of biological role, involved in the de novo purine biosynthesis. Catalyzes the transfer of formate to 5-phospho-ribosyl-glycinamide (GAR), producing 5-phospho-ribosyl-N-formylglycinamide (FGAR). Formate is provided by PurU via hydrolysis of 10-formyl-tetrahydrofolate. This Corynebacterium glutamicum (strain R) protein is Formate-dependent phosphoribosylglycinamide formyltransferase.